The sequence spans 352 residues: S-norcoclaurine synthase 1 (352 aa).

Residues 200-304 (KPLRTVFNRE…RLSIAAFHDP (105 aa)) form the Fe2OG dioxygenase domain. Residues His-228, Asp-230, and His-285 each coordinate Fe cation.

This sequence belongs to the iron/ascorbate-dependent oxidoreductase family. In terms of assembly, monomer. Requires Fe cation as cofactor.

It carries out the reaction (4-hydroxyphenyl)acetaldehyde + dopamine = (S)-norcoclaurine + H2O. With respect to regulation, inhibited by O-phenanthroline, but not by EDTA. Functionally, involved in the biosynthesis of the common precursor of all benzylisoquinoline alkaloids such as morphine, sanguinarine, codeine or berberine. Condenses dopamine and phenylacetaldehyde, 3,4-dihydrophenylacetaldehyde or 4-hydroxyphenylacetaldehyde. This Coptis japonica (Japanese goldthread) protein is S-norcoclaurine synthase 1 (NCS1).